Consider the following 141-residue polypeptide: Large ribosomal subunit protein uL11 (141 aa).

This sequence belongs to the universal ribosomal protein uL11 family. In terms of assembly, part of the ribosomal stalk of the 50S ribosomal subunit. Interacts with L10 and the large rRNA to form the base of the stalk. L10 forms an elongated spine to which L12 dimers bind in a sequential fashion forming a multimeric L10(L12)X complex. Post-translationally, one or more lysine residues are methylated.

Its function is as follows. Forms part of the ribosomal stalk which helps the ribosome interact with GTP-bound translation factors. This is Large ribosomal subunit protein uL11 from Synechococcus sp. (strain CC9902).